We begin with the raw amino-acid sequence, 347 residues long: Dihydroorotase (347 aa).

2 residues coordinate Zn(2+): His17 and His19. Substrate contacts are provided by residues 19–21 (HVR) and Asn45. Zn(2+)-binding residues include Lys102, His139, and His177. Lys102 bears the N6-carboxylysine mark. His139 contributes to the substrate binding site. Leu222 provides a ligand contact to substrate. Asp250 is a binding site for Zn(2+). The active site involves Asp250. Substrate contacts are provided by His254 and Ala266.

The protein belongs to the metallo-dependent hydrolases superfamily. DHOase family. Class II DHOase subfamily. As to quaternary structure, homodimer. Zn(2+) serves as cofactor.

The enzyme catalyses (S)-dihydroorotate + H2O = N-carbamoyl-L-aspartate + H(+). The protein operates within pyrimidine metabolism; UMP biosynthesis via de novo pathway; (S)-dihydroorotate from bicarbonate: step 3/3. Catalyzes the reversible cyclization of carbamoyl aspartate to dihydroorotate. This is Dihydroorotase from Acidovorax sp. (strain JS42).